The sequence spans 281 residues: Ribosomal RNA small subunit methyltransferase A (281 aa).

S-adenosyl-L-methionine is bound by residues Asn-25, Leu-27, Gly-52, Glu-73, Asp-99, and Asn-118.

Belongs to the class I-like SAM-binding methyltransferase superfamily. rRNA adenine N(6)-methyltransferase family. RsmA subfamily.

It is found in the cytoplasm. The enzyme catalyses adenosine(1518)/adenosine(1519) in 16S rRNA + 4 S-adenosyl-L-methionine = N(6)-dimethyladenosine(1518)/N(6)-dimethyladenosine(1519) in 16S rRNA + 4 S-adenosyl-L-homocysteine + 4 H(+). Its function is as follows. Specifically dimethylates two adjacent adenosines (A1518 and A1519) in the loop of a conserved hairpin near the 3'-end of 16S rRNA in the 30S particle. May play a critical role in biogenesis of 30S subunits. In Erythrobacter litoralis (strain HTCC2594), this protein is Ribosomal RNA small subunit methyltransferase A.